The sequence spans 178 residues: uncharacterized protein (178 aa).

The first 19 residues, 1–19, serve as a signal peptide directing secretion; sequence MINRKILLTSLLLIFTVLS. Residues Arg52, Glu60, and Arg94 contribute to the active site.

Belongs to the thermonuclease family.

This is an uncharacterized protein from Haemophilus influenzae (strain ATCC 51907 / DSM 11121 / KW20 / Rd).